A 408-amino-acid polypeptide reads, in one-letter code: Broad specificity amino-acid racemase (408 aa).

An N-terminal signal peptide occupies residues 1-21; that stretch reads MHKKTLLATLILGLLAGQAVA. C70 and C96 are oxidised to a cystine. Catalysis depends on K74, which acts as the Proton acceptor. K74 is modified (N6-(pyridoxal phosphate)lysine). R173 contacts substrate. Catalysis depends on Y300, which acts as the Proton acceptor. M348 lines the substrate pocket.

It belongs to the alanine racemase family. Bsr subfamily. In terms of assembly, homodimer. Requires pyridoxal 5'-phosphate as cofactor.

The protein localises to the periplasm. It catalyses the reaction an L-alpha-amino acid = a D-alpha-amino acid. The catalysed reaction is L-lysine = D-lysine. The enzyme catalyses L-arginine = D-arginine. It carries out the reaction L-alanine = D-alanine. It catalyses the reaction L-serine = D-serine. The catalysed reaction is L-methionine = D-methionine. The enzyme catalyses L-leucine = D-leucine. It carries out the reaction L-cysteine = D-cysteine. It catalyses the reaction L-glutamine = D-glutamine. The catalysed reaction is L-asparagine = D-asparagine. The enzyme catalyses L-histidine = D-histidine. Functionally, amino-acid racemase able to utilize a broad range of substrates. Reversibly racemizes ten of the 19 natural chiral amino acids known, including both non-beta-branched aliphatic amino acids (Ala, Leu, Met, Ser, Cys, Gln and Asn) and positively charged amino acids (His, Lys and Arg). Is not active on negatively charged (Glu and Asp) or aromatic (Tyr, Trp and Phe) amino acids and displays minimal activity towards beta-branched aliphatic (Ile, Val and Thr) substrates. Enables bacteria to produce and release extracellular non-canonical D-amino acids (NCDAAs) that regulate diverse cellular processes. This is Broad specificity amino-acid racemase from Aeromonas hydrophila subsp. hydrophila (strain ATCC 7966 / DSM 30187 / BCRC 13018 / CCUG 14551 / JCM 1027 / KCTC 2358 / NCIMB 9240 / NCTC 8049).